The sequence spans 158 residues: EOLA-like protein (158 aa).

The ASCH domain maps to 6–92 (LSFRQPYAGF…IAGLVDIGET (87 aa)).

It belongs to the EOLA family.

The protein is EOLA-like protein of Pongo abelii (Sumatran orangutan).